Consider the following 221-residue polypeptide: Histone H1-like protein HC2 (221 aa).

2 stretches are compositionally biased toward basic residues: residues 1–50 and 59–70; these read MLGV…KTVA and PVAKKATAKKAP. The tract at residues 1–70 is disordered; it reads MLGVQKKRST…AKKATAKKAP (70 aa).

Belongs to the histone H1/H5 family. HCT subfamily.

Functionally, might have a role in establishing the nucleoid structure of elementary bodies. This is Histone H1-like protein HC2 (hctB) from Chlamydia trachomatis serovar L2 (strain ATCC VR-902B / DSM 19102 / 434/Bu).